We begin with the raw amino-acid sequence, 306 residues long: uncharacterized protein (306 aa).

A coiled-coil region spans residues 13 to 39; sequence NMLNEIAANNNLLNNKNNQTNQLNNNQ. 3 disordered regions span residues 44-76, 103-204, and 216-249; these read YNNQ…HQQN, DSKE…QSGQ, and QKQL…TMQH. A compositionally biased stretch (low complexity) spans 119–201; it reads HQQPIQNNPS…QFAQPNQYNQ (83 aa). The segment covering 218 to 235 has biased composition (basic and acidic residues); it reads QLDKNQPEKIPSKPEKNQ. The helical transmembrane segment at 279-299 threads the bilayer; the sequence is LFDYIIIPIALVLVFLFLVHP.

Its subcellular location is the membrane. This is an uncharacterized protein from Acanthamoeba polyphaga mimivirus (APMV).